Here is a 214-residue protein sequence, read N- to C-terminus: dITP/XTP pyrophosphatase (214 aa).

Position 16 to 21 (16 to 21) interacts with substrate; that stretch reads THNPGK. Mg(2+) contacts are provided by Asp-48 and Asp-77. Catalysis depends on Asp-77, which acts as the Proton acceptor. Substrate is bound by residues Ser-78, 163 to 166, Lys-186, and 198 to 199; these read FGYD and HR.

It belongs to the HAM1 NTPase family. In terms of assembly, homodimer. The cofactor is Mg(2+).

It catalyses the reaction XTP + H2O = XMP + diphosphate + H(+). The catalysed reaction is dITP + H2O = dIMP + diphosphate + H(+). The enzyme catalyses ITP + H2O = IMP + diphosphate + H(+). Pyrophosphatase that catalyzes the hydrolysis of nucleoside triphosphates to their monophosphate derivatives, with a high preference for the non-canonical purine nucleotides XTP (xanthosine triphosphate), dITP (deoxyinosine triphosphate) and ITP. Seems to function as a house-cleaning enzyme that removes non-canonical purine nucleotides from the nucleotide pool, thus preventing their incorporation into DNA/RNA and avoiding chromosomal lesions. The sequence is that of dITP/XTP pyrophosphatase from Bradyrhizobium sp. (strain BTAi1 / ATCC BAA-1182).